A 745-amino-acid polypeptide reads, in one-letter code: Copper-transporting ATPase (745 aa).

One can recognise an HMA domain in the interval Met-1–Lys-67. The Cytoplasmic portion of the chain corresponds to Met-1–Lys-83. Cu cation is bound by residues Cys-12 and Cys-15. The helical transmembrane segment at Leu-84–Ser-104 threads the bilayer. Over Pro-105–Ala-124 the chain is Extracellular. The chain crosses the membrane as a helical span at residues Cys-125–Gln-144. The Cytoplasmic portion of the chain corresponds to Gly-145–His-151. The helical transmembrane segment at Arg-152–Leu-172 threads the bilayer. Residues Trp-173–Phe-194 are Extracellular-facing. A helical membrane pass occupies residues Glu-195–Lys-215. The Cytoplasmic segment spans residues Asp-216–Lys-343. A helical membrane pass occupies residues Val-344 to Ile-366. Topologically, residues Ala-367–Ala-379 are extracellular. The helical transmembrane segment at Leu-380–Leu-397 threads the bilayer. Residues Ala-398–Ile-685 are Cytoplasmic-facing. Residue Asp-435 is the 4-aspartylphosphate intermediate of the active site. Asp-631 and Asp-635 together coordinate Mg(2+). The helical transmembrane segment at Lys-686 to Gly-705 threads the bilayer. At Val-706–Pro-716 the chain is on the extracellular side. The chain crosses the membrane as a helical span at residues Ala-717–Gln-735. At Arg-736–His-745 the chain is on the cytoplasmic side.

It belongs to the cation transport ATPase (P-type) (TC 3.A.3) family. Type IB subfamily.

The protein localises to the cell membrane. It carries out the reaction Cu(2+)(in) + ATP + H2O = Cu(2+)(out) + ADP + phosphate + H(+). Probably involved in copper export. The chain is Copper-transporting ATPase (copA) from Helicobacter pylori (strain J99 / ATCC 700824) (Campylobacter pylori J99).